The chain runs to 485 residues: NADH-quinone oxidoreductase subunit N (485 aa).

The next 14 membrane-spanning stretches (helical) occupy residues 8–28 (LIAL…MLSI), 35–55 (FLNA…LWFV), 71–91 (GFAM…CTFA), 105–125 (FYLL…ANHL), 127–147 (SLFL…GYAF), 159–179 (YTIL…LVYA), 203–223 (LLAG…LVPF), 235–255 (PAPV…GVVM), 271–291 (VVLA…ALSQ), 297–317 (LLGY…IALQ), 326–346 (VGVY…VVSL), 373–393 (AAVM…LGFI), 408–430 (WWLV…RVAV), and 455–475 (IVVL…QPLI).

Belongs to the complex I subunit 2 family. In terms of assembly, NDH-1 is composed of 13 different subunits. Subunits NuoA, H, J, K, L, M, N constitute the membrane sector of the complex.

The protein localises to the cell inner membrane. The enzyme catalyses a quinone + NADH + 5 H(+)(in) = a quinol + NAD(+) + 4 H(+)(out). Its function is as follows. NDH-1 shuttles electrons from NADH, via FMN and iron-sulfur (Fe-S) centers, to quinones in the respiratory chain. The immediate electron acceptor for the enzyme in this species is believed to be ubiquinone. Couples the redox reaction to proton translocation (for every two electrons transferred, four hydrogen ions are translocated across the cytoplasmic membrane), and thus conserves the redox energy in a proton gradient. This is NADH-quinone oxidoreductase subunit N from Escherichia coli O7:K1 (strain IAI39 / ExPEC).